Consider the following 364-residue polypeptide: Chorismate synthase (364 aa).

NADP(+)-binding residues include R48 and R54. FMN is bound by residues 125 to 127, G282, 297 to 301, and R323; these read RSS and KPPAS.

This sequence belongs to the chorismate synthase family. Homotetramer. FMNH2 serves as cofactor.

It catalyses the reaction 5-O-(1-carboxyvinyl)-3-phosphoshikimate = chorismate + phosphate. The protein operates within metabolic intermediate biosynthesis; chorismate biosynthesis; chorismate from D-erythrose 4-phosphate and phosphoenolpyruvate: step 7/7. Catalyzes the anti-1,4-elimination of the C-3 phosphate and the C-6 proR hydrogen from 5-enolpyruvylshikimate-3-phosphate (EPSP) to yield chorismate, which is the branch point compound that serves as the starting substrate for the three terminal pathways of aromatic amino acid biosynthesis. This reaction introduces a second double bond into the aromatic ring system. In Chloroflexus aurantiacus (strain ATCC 29366 / DSM 635 / J-10-fl), this protein is Chorismate synthase.